The chain runs to 168 residues: Small ribosomal subunit protein uS9 (168 aa).

Positions methionine 1–glutamate 29 are enriched in low complexity. The segment at methionine 1–arginine 36 is disordered.

This sequence belongs to the universal ribosomal protein uS9 family.

This is Small ribosomal subunit protein uS9 from Paenarthrobacter aurescens (strain TC1).